We begin with the raw amino-acid sequence, 148 residues long: Large ribosomal subunit protein bL9 (148 aa).

The protein belongs to the bacterial ribosomal protein bL9 family.

In terms of biological role, binds to the 23S rRNA. The sequence is that of Large ribosomal subunit protein bL9 from Syntrophotalea carbinolica (strain DSM 2380 / NBRC 103641 / GraBd1) (Pelobacter carbinolicus).